Consider the following 563-residue polypeptide: Arginine--tRNA ligase (563 aa).

The short motif at 121 to 131 is the 'HIGH' region element; the sequence is PNIAKPFSIGH.

It belongs to the class-I aminoacyl-tRNA synthetase family. As to quaternary structure, monomer.

The protein localises to the cytoplasm. It catalyses the reaction tRNA(Arg) + L-arginine + ATP = L-arginyl-tRNA(Arg) + AMP + diphosphate. The chain is Arginine--tRNA ligase from Streptococcus pneumoniae (strain Hungary19A-6).